The sequence spans 38 residues: NAD-reducing hydrogenase HoxS subunit beta (38 aa).

It belongs to the [NiFe]/[NiFeSe] hydrogenase large subunit family. Tetramer of an alpha and a gamma subunits (flavin-containing dimer), and a delta and a nickel-containing beta subunits (hydrogenase dimer). FMN is required as a cofactor. Ni(2+) serves as cofactor.

It localises to the cytoplasm. It carries out the reaction H2 + NAD(+) = NADH + H(+). The chain is NAD-reducing hydrogenase HoxS subunit beta (hoxH) from Rhodococcus opacus (Nocardia opaca).